A 466-amino-acid chain; its full sequence is ATP synthase subunit beta (466 aa).

Residue 155-162 (GGAGVGKT) participates in ATP binding.

It belongs to the ATPase alpha/beta chains family. F-type ATPases have 2 components, CF(1) - the catalytic core - and CF(0) - the membrane proton channel. CF(1) has five subunits: alpha(3), beta(3), gamma(1), delta(1), epsilon(1). CF(0) has three main subunits: a(1), b(2) and c(9-12). The alpha and beta chains form an alternating ring which encloses part of the gamma chain. CF(1) is attached to CF(0) by a central stalk formed by the gamma and epsilon chains, while a peripheral stalk is formed by the delta and b chains.

The protein localises to the cell inner membrane. It carries out the reaction ATP + H2O + 4 H(+)(in) = ADP + phosphate + 5 H(+)(out). In terms of biological role, produces ATP from ADP in the presence of a proton gradient across the membrane. The catalytic sites are hosted primarily by the beta subunits. The chain is ATP synthase subunit beta from Azoarcus sp. (strain BH72).